Consider the following 139-residue polypeptide: Cytochrome c2 (139 aa).

The N-terminal stretch at 1-25 is a signal peptide; sequence MVKKLLTILSIAATAGSLSIGTASA. Position 26 is a pyrrolidone carboxylic acid (Gln-26). Heme c is bound by residues Cys-38, Cys-41, His-42, and Met-118.

It belongs to the cytochrome c family. Binds 1 heme c group covalently per subunit.

Cytochrome c2 is found mainly in purple, non-sulfur, photosynthetic bacteria where it functions as the electron donor to the oxidized bacteriochlorophyll in the photophosphorylation pathway. However, it may also have a role in the respiratory chain and is found in some non-photosynthetic bacteria. This chain is Cytochrome c2 (cycA), found in Rhodopseudomonas palustris (strain ATCC BAA-98 / CGA009).